Reading from the N-terminus, the 564-residue chain is Protein glycosylation K (564 aa).

The Cytoplasmic portion of the chain corresponds to 1 to 15 (MLKKLFFILSKEDKN). The chain crosses the membrane as a helical span at residues 16–38 (FLFFLLVFSVFISFIETFAISLV). The region spanning 17-319 (LFFLLVFSVF…IITSYHDLLY (303 aa)) is the ABC transmembrane type-1 domain. At 39–76 (MPFITLASDFSYFDRNKYLISLKEYLNIPVFEIIVYFG) the chain is on the extracellular side. The important for stimulation of ATPase activity by lipid-linked oligosaccharides and subsequent translocation of lipid-linked oligosaccharides stretch occupies residues 46-67 (SDFSYFDRNKYLISLKEYLNIP). A helical membrane pass occupies residues 77 to 98 (VGLIVFYVFRALLNAYYFHLLA). Residues 99 to 149 (RFSKGRYHAIAYKVFSKFLNINYEKFTQKNQSEILKSITGEVYNLSTMISS) are Cytoplasmic-facing. Residues 150–170 (FLLLMSEIFVVLLLYALMLLI) traverse the membrane as a helical segment. Residues 171-173 (NYK) are Extracellular-facing. A helical transmembrane segment spans residues 174-197 (ITLFLSIFMVLNAFILVKILSPII). Topologically, residues 198-254 (KKAGVRREEAMKNFFEILNTNLNNFKFIKLKTKEDGVLSLFKAQSEAFSKANITNES) are cytoplasmic. Residues 255–276 (VAAVPRIYLEGIGFCVLVFIVV) form a helical membrane-spanning segment. Residues 277–292 (FLVLKNESDISGILST) lie on the Extracellular side of the membrane. A helical transmembrane segment spans residues 293–314 (ISIFVLALYRLMPSANRIITSY). The Cytoplasmic portion of the chain corresponds to 315-564 (HDLLYYHSSL…LEHGKLKEEK (250 aa)). The ABC transporter domain maps to 349 to 564 (LKICNLSFGY…LEHGKLKEEK (216 aa)). ATP is bound at residue 382–389 (GESGCGKS).

Belongs to the ABC transporter superfamily. Homodimer; domain-swapped. Helices that arise in transmembrane regions 4 and 5 from one subunit cross over and contact the nucleotide-binding domain from the other subunit.

The protein resides in the cell inner membrane. It catalyses the reaction ATP + H2O + lipopolysaccharideSide 1 = ADP + phosphate + lipopolysaccharideSide 2.. It participates in protein modification; protein glycosylation. In terms of biological role, mediates the ATP-dependent translocation of the undecaprenylpyrophosphate-linked heptasaccharide intermediate across the cell membrane; this is an essential step during the N-linked protein glycosylation pathway. Transport across the membrane is effected via ATP-driven conformation changes. Most likely, only the polar and charged part of the glycolipid enter the substrate-binding cavity, and the lipid tail remains exposed to the membrane lipids during the transmembrane flipping process. The sequence is that of Protein glycosylation K (pglK) from Campylobacter jejuni subsp. jejuni serotype O:2 (strain ATCC 700819 / NCTC 11168).